The chain runs to 336 residues: Protein-glutamate methylesterase/protein-glutamine glutaminase 2 (336 aa).

A Response regulatory domain is found at 2–119 (KIAIVNDMPM…PNPKEAAAPL (118 aa)). Position 53 is a 4-aspartylphosphate (Asp-53). The CheB-type methylesterase domain occupies 147–336 (PSRRDRLVAI…APRLIEVFTQ (190 aa)). Residues Ser-159, His-186, and Asp-279 contribute to the active site.

The protein belongs to the CheB family. In terms of processing, phosphorylated by CheA. Phosphorylation of the N-terminal regulatory domain activates the methylesterase activity.

It is found in the cytoplasm. It catalyses the reaction [protein]-L-glutamate 5-O-methyl ester + H2O = L-glutamyl-[protein] + methanol + H(+). It carries out the reaction L-glutaminyl-[protein] + H2O = L-glutamyl-[protein] + NH4(+). Functionally, involved in chemotaxis. Part of a chemotaxis signal transduction system that modulates chemotaxis in response to various stimuli. Catalyzes the demethylation of specific methylglutamate residues introduced into the chemoreceptors (methyl-accepting chemotaxis proteins or MCP) by CheR. Also mediates the irreversible deamidation of specific glutamine residues to glutamic acid. The protein is Protein-glutamate methylesterase/protein-glutamine glutaminase 2 of Pseudomonas syringae pv. syringae (strain B728a).